The following is a 467-amino-acid chain: 3-isopropylmalate dehydratase large subunit (467 aa).

3 residues coordinate [4Fe-4S] cluster: Cys347, Cys407, and Cys410.

Belongs to the aconitase/IPM isomerase family. LeuC type 1 subfamily. In terms of assembly, heterodimer of LeuC and LeuD. Requires [4Fe-4S] cluster as cofactor.

The catalysed reaction is (2R,3S)-3-isopropylmalate = (2S)-2-isopropylmalate. The protein operates within amino-acid biosynthesis; L-leucine biosynthesis; L-leucine from 3-methyl-2-oxobutanoate: step 2/4. Catalyzes the isomerization between 2-isopropylmalate and 3-isopropylmalate, via the formation of 2-isopropylmaleate. The sequence is that of 3-isopropylmalate dehydratase large subunit from Prochlorococcus marinus (strain MIT 9301).